The following is a 201-amino-acid chain: Ras-related protein Rab-9A (201 aa).

Residue alanine 2 is modified to N-acetylalanine. The GTP site is built by glycine 17, valine 18, glycine 19, lysine 20, serine 21, serine 22, serine 34, histidine 38, and threonine 39. Serine 21 contributes to the Mg(2+) binding site. The Switch 1 signature appears at 31–42 (KFDSQLFHTIGV). A Phosphoserine modification is found at serine 34. Threonine 39 and aspartate 62 together coordinate Mg(2+). Residues 64–78 (AGQERFRSLRTPFYR) carry the Switch 2 motif. Residues glycine 65, asparagine 124, lysine 125, aspartate 127, and lysine 156 each contribute to the GTP site. Serine 179 carries the phosphoserine modification. Phosphothreonine is present on threonine 187. S-geranylgeranyl cysteine attachment occurs at residues cysteine 200 and cysteine 201.

The protein belongs to the small GTPase superfamily. Rab family. In terms of assembly, interacts (preferentially in its GTP-bound form) with GCC2 (via its GRIP domain). Interacts (GTP-bound form) with SGSM1; the GDP-bound form has much lower affinity for SGSM1. Interacts with SGSM2. The GTP-bound form but not the GDP-bound form interacts with HPS4 and the BLOC-3 complex (heterodimer of HPS1 and HPS4) but does not interact with HPS1 alone. Interacts (GTP-bound form) with NDE1; two RAB9A-GTP molecules lie on the opposite sides of the NDE1 homodimer; the interaction leads to RAB9A-dynein motor tethering. Interacts (GTP-bound form) with NDEL1. Requires Mg(2+) as cofactor.

The protein localises to the cell membrane. It is found in the endoplasmic reticulum membrane. The protein resides in the golgi apparatus membrane. It localises to the late endosome. Its subcellular location is the cytoplasmic vesicle. The protein localises to the phagosome membrane. It is found in the phagosome. The protein resides in the cytoplasmic vesicle membrane. It localises to the melanosome. The enzyme catalyses GTP + H2O = GDP + phosphate + H(+). With respect to regulation, regulated by guanine nucleotide exchange factors (GEFs) which promote the exchange of bound GDP for free GTP. Regulated by GTPase activating proteins (GAPs) which increase the GTP hydrolysis activity. Inhibited by GDP dissociation inhibitors (GDIs). In terms of biological role, the small GTPases Rab are key regulators of intracellular membrane trafficking, from the formation of transport vesicles to their fusion with membranes. Rabs cycle between an inactive GDP-bound form and an active GTP-bound form that is able to recruit to membranes different sets of downstream effectors directly responsible for vesicle formation, movement, tethering and fusion. RAB9A is involved in the transport of proteins between the endosomes and the trans-Golgi network (TGN). Specifically uses NDE1/NDEL1 as an effector to interact with the dynein motor complex in order to control retrograde trafficking of RAB9-associated late endosomes to the TGN. Involved in the recruitment of SGSM2 to melanosomes and is required for the proper trafficking of melanogenic enzymes TYR, TYRP1 and DCT/TYRP2 to melanosomes in melanocytes. The sequence is that of Ras-related protein Rab-9A from Rattus norvegicus (Rat).